The chain runs to 431 residues: Fumarylacetoacetase (431 aa).

Asp-133 lines the Ca(2+) pocket. Tyr-135 lines the substrate pocket. His-140 (proton acceptor) is an active-site residue. A substrate-binding site is contributed by Arg-149. The Ca(2+) site is built by Glu-209, Glu-211, and Asp-243. Asp-243 serves as a coordination point for Mg(2+). Substrate contacts are provided by Gln-250 and Tyr-254. The Mg(2+) site is built by Lys-263 and Thr-267. Thr-362 lines the substrate pocket.

It belongs to the FAH family. It depends on Ca(2+) as a cofactor. Mg(2+) serves as cofactor.

It catalyses the reaction 4-fumarylacetoacetate + H2O = acetoacetate + fumarate + H(+). It participates in amino-acid degradation; L-phenylalanine degradation; acetoacetate and fumarate from L-phenylalanine: step 6/6. Use of phenylalanine and phenylacetate as a carbon source. The polypeptide is Fumarylacetoacetase (fahA) (Emericella nidulans (strain FGSC A4 / ATCC 38163 / CBS 112.46 / NRRL 194 / M139) (Aspergillus nidulans)).